We begin with the raw amino-acid sequence, 617 residues long: BPI fold-containing family B member 4 (617 aa).

The N-terminal stretch at 1 to 17 is a signal peptide; that stretch reads MWTAWCVAALSVAAVCG. The tract at residues 124–149 is disordered; the sequence is RPSDSAYHRGPGRYRSAADPSSAGRL. Asn-275 is a glycosylation site (N-linked (GlcNAc...) asparagine). Cys-297 and Cys-334 form a disulfide bridge.

The protein belongs to the BPI/LBP/Plunc superfamily. BPI/LBP family. As to expression, highly expressed in olfactory mucosa but undetectable in thymus, kidney, lung, brain, spleen and liver.

The protein resides in the secreted. Its subcellular location is the cytoplasm. Functionally, may have the capacity to recognize and bind specific classes of odorants. May act as a carrier molecule, transporting odorants across the mucus layer to access receptor sites. May serve as a primary defense mechanism by recognizing and removing potentially harmful odorants or pathogenic microorganisms from the mucosa or clearing excess odorant from mucus to enable new odorant stimuli to be received. The protein is BPI fold-containing family B member 4 (Bpifb4) of Rattus norvegicus (Rat).